We begin with the raw amino-acid sequence, 212 residues long: MHPFLQELKQGSQALGLDLSDEVLGLLLKYQDALVLWNKAYNLTAIRDPKEMLVKHLLDSLSILKDLPQGRLLDVGTGGGMPGMIIALCQPERNCVLLDSNGKKIRFLKQFIADLKLKNVVAVQTRVENEESIQELGKFDVITSRAFASLLDFVDAARPYMYESTIIAAMKGLVPTEEMQQLKAEFSCQVIGLQVPRLDEQRHLLLLQQIKN.

Residues Gly76, Met81, 127–128, and Arg145 contribute to the S-adenosyl-L-methionine site; that span reads VE.

This sequence belongs to the methyltransferase superfamily. RNA methyltransferase RsmG family.

Its subcellular location is the cytoplasm. It catalyses the reaction guanosine(527) in 16S rRNA + S-adenosyl-L-methionine = N(7)-methylguanosine(527) in 16S rRNA + S-adenosyl-L-homocysteine. Its function is as follows. Specifically methylates the N7 position of guanine in position 527 of 16S rRNA. This chain is Ribosomal RNA small subunit methyltransferase G, found in Acinetobacter baylyi (strain ATCC 33305 / BD413 / ADP1).